The following is a 481-amino-acid chain: Glutamate mutase epsilon subunit (481 aa).

R67 provides a ligand contact to L-glutamate. G69 serves as a coordination point for adenosylcob(III)alamin. R99 serves as a coordination point for L-glutamate. N122 contributes to the adenosylcob(III)alamin binding site. L-glutamate contacts are provided by residues R148–H149, E170, and Y176. Residue P179 participates in adenosylcob(III)alamin binding. Residue Y180 participates in L-glutamate binding. Adenosylcob(III)alamin contacts are provided by F296, K325, E329, and I333.

It belongs to the methylaspartate mutase GlmE subunit family. As to quaternary structure, heterotetramer composed of 2 epsilon subunits (GlmE) and 2 sigma subunits (GlmS). GlmE exists as a homodimer and GlmS as a monomer. Adenosylcob(III)alamin serves as cofactor.

It catalyses the reaction (2S,3S)-3-methyl-L-aspartate = L-glutamate. It participates in amino-acid degradation; L-glutamate degradation via mesaconate pathway; acetate and pyruvate from L-glutamate: step 1/4. Functionally, catalyzes the carbon skeleton rearrangement of L-glutamate to L-threo-3-methylaspartate ((2S,3S)-3-methylaspartate). The chain is Glutamate mutase epsilon subunit from Escherichia coli O157:H7.